Here is a 238-residue protein sequence, read N- to C-terminus: 2,3,4,5-tetrahydropyridine-2,6-dicarboxylate N-acetyltransferase (238 aa).

This sequence belongs to the transferase hexapeptide repeat family. DapH subfamily.

It carries out the reaction (S)-2,3,4,5-tetrahydrodipicolinate + acetyl-CoA + H2O = L-2-acetamido-6-oxoheptanedioate + CoA. It participates in amino-acid biosynthesis; L-lysine biosynthesis via DAP pathway; LL-2,6-diaminopimelate from (S)-tetrahydrodipicolinate (acetylase route): step 1/3. Its function is as follows. Catalyzes the transfer of an acetyl group from acetyl-CoA to tetrahydrodipicolinate. The polypeptide is 2,3,4,5-tetrahydropyridine-2,6-dicarboxylate N-acetyltransferase (Clostridioides difficile (strain 630) (Peptoclostridium difficile)).